A 690-amino-acid polypeptide reads, in one-letter code: NF-kappa-B-repressing factor (690 aa).

Residues 1–296 (MEKILQMAEG…FKHTFGEDLV (296 aa)) are active repression domain. The short motif at 25 to 45 (KPSKGQKRHLSTCDGQNPPKK) is the Nuclear localization signal element. Disordered stretches follow at residues 27 to 87 (SKGQ…NEQT) and 132 to 163 (MYFD…QTFP). Residue lysine 68 forms a Glycyl lysine isopeptide (Lys-Gly) (interchain with G-Cter in SUMO2) linkage. Low complexity predominate over residues 142–163 (STTSQQANSQSTPEPSPSQTFP). The DNA-binding element occupies 296 to 388 (VVCQIGMSSY…RVFLQDHCLA (93 aa)). Over residues 414-431 (PTYPSVKSSQCHTGSSPR) the composition is skewed to polar residues. Residues 414-437 (PTYPSVKSSQCHTGSSPRGSGKKK) are disordered. A Glycyl lysine isopeptide (Lys-Gly) (interchain with G-Cter in SUMO2) cross-link involves residue lysine 500. In terms of domain architecture, G-patch spans 551–596 (EDNIGNQLLRKMGWTGGGLGKSGEGIREPISVKEQHKREGLGLDVE). The 65-residue stretch at 600 to 664 (KIAKRDIEQI…DRYLVVGRKR (65 aa)) folds into the R3H domain. Serine 618 carries the phosphoserine modification. Glycyl lysine isopeptide (Lys-Gly) (interchain with G-Cter in SUMO2) cross-links involve residues lysine 666 and lysine 674.

In terms of assembly, interacts with NF-kappa-B. Interacts with XRN2. Interacts (via G-patch domain) with DHX15; promoting the RNA helicase activity of DHX15. Widely and constitutively expressed. Expressed at lower level in colon, peripheral blood lymphocytes, lung and kidney.

It localises to the nucleus. The protein localises to the nucleolus. Its function is as follows. Enhances the ATPase activity of DHX15 by acting like a brace that tethers mobile sections of DHX15 together, stabilizing a functional conformation with high RNA affinity of DHX15. Involved in the constitutive silencing of the interferon beta promoter, independently of the virus-induced signals, and in the inhibition of the basal and cytokine-induced iNOS promoter activity. Also involved in the regulation of IL-8 transcription. May also act as a DNA-binding transcription regulator: interacts with a specific negative regulatory element (NRE) 5'-AATTCCTCTGA-3' to mediate transcriptional repression of certain NK-kappa-B responsive genes. The chain is NF-kappa-B-repressing factor from Homo sapiens (Human).